We begin with the raw amino-acid sequence, 475 residues long: MTAPRTLYDKIWDDHVVHQSEDGTCLLYIDRHLVHEVTSPQAFEGLRMTGRKVRAPEKTIAVPDHNVPTTEGRDTKIDNEESRIQVEALDKNARDFGINYYPVSDIRQGIVHIVGPEQGWTLPGMTVVCGDSHTATHGAFGALAHGIGTSEVEHVLATQTLIQKKSKNMKVEITGSLRPGVTAKDITLSVIGLTGTAGGTGYVIEYCGQAIRELSMEGRMTVCNMAIEGGARAGLIAPDEKTFAYVMGRPHAPKGAAWEAALAYWKTLFTDEGAQFDKVVTIRGEDIAPVVTWGTSPEDVLPITATVPAPEDFTGGKVEAARRSLEYMGLTPGQKLTDIKIDTVFIGSCTNGRIEDLRAAAEILKGKKVAPGMRAMVVPGSGLVRAQAEEEGLAQIFIDAGFEWRLAGCSMCLAMNPDQLSPGERCASTSNRNFEGRQGRNGRTHLVSPGMAAAAAITGHLTDVRDLMTAPAEPA.

[4Fe-4S] cluster is bound by residues Cys-349, Cys-409, and Cys-412.

The protein belongs to the aconitase/IPM isomerase family. LeuC type 1 subfamily. Heterodimer of LeuC and LeuD. [4Fe-4S] cluster serves as cofactor.

It catalyses the reaction (2R,3S)-3-isopropylmalate = (2S)-2-isopropylmalate. It functions in the pathway amino-acid biosynthesis; L-leucine biosynthesis; L-leucine from 3-methyl-2-oxobutanoate: step 2/4. Its function is as follows. Catalyzes the isomerization between 2-isopropylmalate and 3-isopropylmalate, via the formation of 2-isopropylmaleate. The chain is 3-isopropylmalate dehydratase large subunit from Cereibacter sphaeroides (strain KD131 / KCTC 12085) (Rhodobacter sphaeroides).